The chain runs to 489 residues: Aklavinone 12-hydroxylase DnrF (489 aa).

Residues 17 to 18 (LG), Glu37, Gln121, and Leu145 contribute to the FAD site. The active-site Proton acceptor is the Tyr224. Position 308 (Asp308) interacts with FAD. Position 317 (Gly317) interacts with aklavinone. Disordered regions lie at residues 402-428 (VAAE…RAPH) and 455-489 (EGGA…PPAN). Positions 468–482 (RIWASASTSISSAAM) are enriched in low complexity.

This sequence belongs to the PheA/TfdB FAD monooxygenase family. In terms of assembly, monomer. Requires FAD as cofactor.

It carries out the reaction aklavinone + NADPH + O2 + H(+) = epsilon-rhodomycinone + NADP(+) + H2O. Its pathway is antibiotic biosynthesis; daunorubicin biosynthesis. It functions in the pathway antibiotic biosynthesis; carminomycin biosynthesis. It participates in antibiotic biosynthesis; rhodomycin biosynthesis. In terms of biological role, involved in the biosynthesis of the anthracyclines carminomycin, rhodomycin and daunorubicin (daunomycin) which are aromatic polyketide antibiotics that exhibit high cytotoxicity and are widely applied in the chemotherapy of a variety of cancers. Catalyzes the incorporation of a hydroxyl group at position C-11 of aklavinone, resulting in epsilon-rhodomycinone. It cannot accept substrates glycosylated at position C-7. It can also hydroxylate 11-deoxycarminomycinone and can use both NAD or NADP. This Streptomyces peucetius protein is Aklavinone 12-hydroxylase DnrF (dnrF).